Consider the following 64-residue polypeptide: MAFKIIASQCTQCGACEFECPSGAISFKTDRFVVDPKICTECRIEFDAPKCRAICPMPNTCVPA.

The region spanning A2–D30 is the 4Fe-4S ferredoxin-type domain. Residues C10, C13, C16, C20, C39, C42, C51, and C55 each coordinate [4Fe-4S] cluster.

[4Fe-4S] cluster is required as a cofactor.

The protein is Ferredoxin-like protein in nif region (fdxN) of Rhizobium leguminosarum bv. trifolii.